The following is a 246-amino-acid chain: Putative L,D-transpeptidase YafK (246 aa).

An N-terminal signal peptide occupies residues 1-19; it reads MRKIALILAMLLIPCVSFA. The L,D-TPase catalytic domain occupies 44-174; sequence VYIQIFKEER…GQPSVQVSIY (131 aa). His135 (proton donor/acceptor) is an active-site residue. The active-site Nucleophile is the Cys143.

It belongs to the YkuD family.

It functions in the pathway cell wall biogenesis; peptidoglycan biosynthesis. This chain is Putative L,D-transpeptidase YafK (yafK), found in Escherichia coli O157:H7.